Consider the following 232-residue polypeptide: MDEARKLKIAAAAEALTYVKDGMRLGIGTGSTAEEFVRLLAEKVKGGFRVIGVPTSERTAKLCEELGVALTTLEETPHLDLTIDGADEVDGELSLIKGGGGALLREKIVAAASDSMIVIADQSKVVETLGRFPLPIEVNRFGLGATIRAIEAAAVKCGLAGPLNLRLKDGSPFLTDGGHYIVDASFGRIPDPKTLSDALFAIPGVVEHGLFIGLARAAIIAGTDGIRTMNRS.

Substrate is bound by residues 29-32 (TGST), 84-87 (DGAD), and 97-100 (KGGG). Residue glutamate 106 is the Proton acceptor of the active site. A substrate-binding site is contributed by lysine 124.

The protein belongs to the ribose 5-phosphate isomerase family. As to quaternary structure, homodimer.

It catalyses the reaction aldehydo-D-ribose 5-phosphate = D-ribulose 5-phosphate. The protein operates within carbohydrate degradation; pentose phosphate pathway; D-ribose 5-phosphate from D-ribulose 5-phosphate (non-oxidative stage): step 1/1. Functionally, catalyzes the reversible conversion of ribose-5-phosphate to ribulose 5-phosphate. This chain is Ribose-5-phosphate isomerase A, found in Brucella suis biovar 1 (strain 1330).